The chain runs to 260 residues: F-actin-capping protein subunit beta (260 aa).

The protein belongs to the F-actin-capping protein beta subunit family. In terms of assembly, component of the F-actin capping complex, composed of a heterodimer of an alpha and a beta subunit.

It localises to the cytoplasm. The protein localises to the cytoskeleton. Its subcellular location is the actin patch. F-actin-capping proteins bind in a Ca(2+)-independent manner to the fast growing ends of actin filaments (barbed end) thereby blocking the exchange of subunits at these ends. Unlike other capping proteins (such as gelsolin and severin), these proteins do not sever actin filaments. The protein is F-actin-capping protein subunit beta (CAP2) of Yarrowia lipolytica (strain CLIB 122 / E 150) (Yeast).